Reading from the N-terminus, the 241-residue chain is MEWREEGILLSTRRHGESAAIIEVFTPSHGRHAGVVRGGTSRKIAPILQPGAQLDLTWRARLEDHIGSFLVEPVRSRAAAAMGDRLALAGLNAVTALLGFCLPEREAHRPLYVETERLLDLLGEGEIWPLAYLRWEVQLLHDMGYALALEACAVTGQRDDLIYVSPKSGRAVSAKGAGDWADRLLPLPPILRGIGGGPDAEIAQAFITTGYFLTEHLARDLGGKPLPEARARFVETFSRRL.

The protein belongs to the RecO family.

Its function is as follows. Involved in DNA repair and RecF pathway recombination. The protein is DNA repair protein RecO of Roseobacter denitrificans (strain ATCC 33942 / OCh 114) (Erythrobacter sp. (strain OCh 114)).